A 205-amino-acid polypeptide reads, in one-letter code: Molybdenum cofactor guanylyltransferase (205 aa).

Residues 14–16 (LAG), Lys27, Asp77, and Asp107 each bind GTP. Mg(2+) is bound at residue Asp107.

The protein belongs to the MobA family. Monomer. Requires Mg(2+) as cofactor.

It is found in the cytoplasm. The catalysed reaction is Mo-molybdopterin + GTP + H(+) = Mo-molybdopterin guanine dinucleotide + diphosphate. Its function is as follows. Transfers a GMP moiety from GTP to Mo-molybdopterin (Mo-MPT) cofactor (Moco or molybdenum cofactor) to form Mo-molybdopterin guanine dinucleotide (Mo-MGD) cofactor. The polypeptide is Molybdenum cofactor guanylyltransferase (Burkholderia ambifaria (strain MC40-6)).